Consider the following 80-residue polypeptide: Large ribosomal subunit protein bL31B (80 aa).

Belongs to the bacterial ribosomal protein bL31 family. Type B subfamily. Part of the 50S ribosomal subunit.

The chain is Large ribosomal subunit protein bL31B from Xylella fastidiosa (strain 9a5c).